Consider the following 55-residue polypeptide: Large ribosomal subunit protein eL37 (55 aa).

The Zn(2+) site is built by C20, C23, C35, and C38. A C4-type zinc finger spans residues 20 to 38; it reads CRRCGKNSYHKRHHRCSSC.

The protein belongs to the eukaryotic ribosomal protein eL37 family. Zn(2+) serves as cofactor.

Binds to the 23S rRNA. The polypeptide is Large ribosomal subunit protein eL37 (Cenarchaeum symbiosum (strain A)).